The sequence spans 2698 residues: Chromodomain-helicase-DNA-binding protein 6 (2698 aa).

Basic and acidic residues-rich tracts occupy residues Met-1–Leu-12, Glu-100–Pro-115, and Glu-122–Cys-171. A disordered region spans residues Met-1 to Arg-243. Residues Met-1–His-746 form a required for DNA-dependent ATPase activity region. Residues Gln-213–Glu-224 show a composition bias toward low complexity. 2 consecutive Chromo domains span residues Asn-291–Arg-342 and Ile-374–Glu-438. The region spanning Leu-472–Ser-646 is the Helicase ATP-binding domain. Asp-485–Thr-492 contributes to the ATP binding site. The DEAH box motif lies at Asp-597–His-600. In terms of domain architecture, Helicase C-terminal spans Leu-786–Leu-955. Residues Ser-1318–Lys-1370 are disordered. Positions Ser-1320 to Thr-1329 are enriched in polar residues. Basic and acidic residues predominate over residues Ile-1332 to Gly-1350. The region spanning Arg-1435–Val-1489 is the Myb-like domain. Positions Glu-1707 to Ala-1730 are enriched in polar residues. The segment at Glu-1707–Ser-1731 is disordered. Ser-1852 carries the phosphoserine modification. 6 disordered regions span residues Gly-1935 to Ile-2046, Leu-2111 to Ser-2137, Thr-2308 to Lys-2337, Pro-2359 to Leu-2387, Ala-2538 to Thr-2587, and Gln-2626 to Asn-2698. Basic and acidic residues-rich tracts occupy residues Gly-1943–Arg-1955, Phe-1975–Glu-1991, and Ser-2004–Ala-2024. Composition is skewed to low complexity over residues Ser-2117–Ser-2127 and Pro-2315–Glu-2336. Low complexity predominate over residues Ala-2538–Thr-2550. The span at Lys-2552–Pro-2573 shows a compositional bias: basic and acidic residues. Polar residues-rich tracts occupy residues Phe-2578–Thr-2587 and Ser-2664–Val-2675. Basic and acidic residues predominate over residues Pro-2677–Asn-2698.

The protein belongs to the SNF2/RAD54 helicase family. Interacts with NFE2L2; involved in activation of the transcription. May interact with PPARA. In terms of tissue distribution, widely expressed.

The protein localises to the nucleus. It is found in the nucleoplasm. The enzyme catalyses ATP + H2O = ADP + phosphate + H(+). Its function is as follows. ATP-dependent chromatin-remodeling factor. Regulates transcription by disrupting nucleosomes in a largely non-sliding manner which strongly increases the accessibility of chromatin. Activates transcription of specific genes in response to oxidative stress through interaction with NFE2L2. The polypeptide is Chromodomain-helicase-DNA-binding protein 6 (Chd6) (Rattus norvegicus (Rat)).